The sequence spans 505 residues: Maturase K (505 aa).

This sequence belongs to the intron maturase 2 family. MatK subfamily.

It localises to the plastid. Its subcellular location is the chloroplast. Its function is as follows. Usually encoded in the trnK tRNA gene intron. Probably assists in splicing its own and other chloroplast group II introns. In Dioon edule (Virgin's palm), this protein is Maturase K.